The sequence spans 837 residues: Protein translocase subunit SecA (837 aa).

Residues Gln-85, 103–107 (GEGKT), and Asp-493 contribute to the ATP site. Zn(2+) contacts are provided by Cys-821, Cys-823, Cys-832, and His-833.

Belongs to the SecA family. Monomer and homodimer. Part of the essential Sec protein translocation apparatus which comprises SecA, SecYEG and auxiliary proteins SecDF. Other proteins may also be involved. Zn(2+) serves as cofactor.

The protein localises to the cell membrane. It localises to the cytoplasm. The enzyme catalyses ATP + H2O + cellular proteinSide 1 = ADP + phosphate + cellular proteinSide 2.. Its function is as follows. Part of the Sec protein translocase complex. Interacts with the SecYEG preprotein conducting channel. Has a central role in coupling the hydrolysis of ATP to the transfer of proteins into and across the cell membrane, serving as an ATP-driven molecular motor driving the stepwise translocation of polypeptide chains across the membrane. The chain is Protein translocase subunit SecA from Streptococcus pneumoniae serotype 2 (strain D39 / NCTC 7466).